Consider the following 656-residue polypeptide: Phosphoprotein 85 (656 aa).

Disordered stretches follow at residues 1-174 (MSSR…EGDE) and 615-656 (NGNH…EYCC). Residues 46–55 (SATEDLDRME) show a composition bias toward basic and acidic residues. 2 stretches are compositionally biased toward low complexity: residues 59–70 (SPYSVSSDAPSS) and 140–160 (DNSS…RSTS). A compositionally biased stretch (pro residues) spans 625–634 (SPPPPLPPRD). Residues 635-656 (YPQRDERDRHRRDRRDSGEYCC) are compositionally biased toward basic and acidic residues.

Belongs to the herpesviridae pp85 family. In terms of processing, phosphorylated.

Its subcellular location is the virion tegument. It localises to the host cytoplasm. This chain is Phosphoprotein 85 (UL25), found in Homo sapiens (Human).